Here is a 372-residue protein sequence, read N- to C-terminus: Glutamate 5-kinase (372 aa).

Residue lysine 14 participates in ATP binding. Residues serine 54, aspartate 141, and asparagine 153 each contribute to the substrate site. 173-174 serves as a coordination point for ATP; it reads TD. The 79-residue stretch at 280–358 folds into the PUA domain; that stretch reads RGTLVLDDGA…ESIVRELGYM (79 aa).

The protein belongs to the glutamate 5-kinase family.

It localises to the cytoplasm. It carries out the reaction L-glutamate + ATP = L-glutamyl 5-phosphate + ADP. Its pathway is amino-acid biosynthesis; L-proline biosynthesis; L-glutamate 5-semialdehyde from L-glutamate: step 1/2. Its function is as follows. Catalyzes the transfer of a phosphate group to glutamate to form L-glutamate 5-phosphate. The polypeptide is Glutamate 5-kinase (Pseudomonas syringae pv. syringae (strain B728a)).